Reading from the N-terminus, the 840-residue chain is Translation initiation factor IF-2 (840 aa).

Disordered stretches follow at residues 94-157 and 169-256; these read KRSP…AGAE and PVAK…PTGP. A compositionally biased stretch (basic and acidic residues) spans 95–143; it reads RSPDEIEAERQRELEEQRAAEEAERLKAEEAAARQRAEEEARKAEEAAR. The segment covering 144 to 157 has biased composition (low complexity); it reads AKAAQEAAATAGAE. Basic and acidic residues-rich tracts occupy residues 175–191 and 223–232; these read AVEE…PKRD and STDEESDGYR. A compositionally biased stretch (basic residues) spans 233-247; the sequence is RGGRGGKSKLKKRNQ. Residues 340-509 form the tr-type G domain; that stretch reads TRAPVVTVMG…LLQAEVLELK (170 aa). Residues 349–356 are G1; it reads GHVDHGKT. Residue 349-356 participates in GTP binding; sequence GHVDHGKT. The tract at residues 374–378 is G2; sequence GITQH. The interval 395–398 is G3; sequence DTPG. GTP is bound by residues 395-399 and 449-452; these read DTPGH and NKID. The interval 449–452 is G4; sequence NKID. The G5 stretch occupies residues 485 to 487; that stretch reads SAK.

It belongs to the TRAFAC class translation factor GTPase superfamily. Classic translation factor GTPase family. IF-2 subfamily.

The protein resides in the cytoplasm. In terms of biological role, one of the essential components for the initiation of protein synthesis. Protects formylmethionyl-tRNA from spontaneous hydrolysis and promotes its binding to the 30S ribosomal subunits. Also involved in the hydrolysis of GTP during the formation of the 70S ribosomal complex. The sequence is that of Translation initiation factor IF-2 from Pseudomonas aeruginosa (strain UCBPP-PA14).